The following is a 154-amino-acid chain: D-aminoacyl-tRNA deacylase (154 aa).

The Gly-cisPro motif, important for rejection of L-amino acids signature appears at G142 to P143.

This sequence belongs to the DTD family. Homodimer.

The protein localises to the cytoplasm. The catalysed reaction is glycyl-tRNA(Ala) + H2O = tRNA(Ala) + glycine + H(+). It catalyses the reaction a D-aminoacyl-tRNA + H2O = a tRNA + a D-alpha-amino acid + H(+). In terms of biological role, an aminoacyl-tRNA editing enzyme that deacylates mischarged D-aminoacyl-tRNAs. Also deacylates mischarged glycyl-tRNA(Ala), protecting cells against glycine mischarging by AlaRS. Acts via tRNA-based rather than protein-based catalysis; rejects L-amino acids rather than detecting D-amino acids in the active site. By recycling D-aminoacyl-tRNA to D-amino acids and free tRNA molecules, this enzyme counteracts the toxicity associated with the formation of D-aminoacyl-tRNA entities in vivo and helps enforce protein L-homochirality. The chain is D-aminoacyl-tRNA deacylase from Acidovorax sp. (strain JS42).